The chain runs to 367 residues: Leu/Ile/Val-binding protein (367 aa).

A signal peptide spans 1–23; the sequence is MNIKGKALLAGCIALAFSNMALA. C76 and C101 are joined by a disulfide.

It belongs to the leucine-binding protein family.

It is found in the periplasm. This protein is a component of the leucine, isoleucine, valine, (threonine) transport system, which is one of the two periplasmic binding protein-dependent transport systems of the high-affinity transport of the branched-chain amino acids. The polypeptide is Leu/Ile/Val-binding protein (livJ) (Escherichia coli O157:H7).